The sequence spans 262 residues: MSIMRRILCLAVVIFIINDVSSQGLGNNKNWKKNGMSLSSPGNKKPTGNNAVPQKSKMNNMNQNSLSQPKRSSPPGNSMYNMANQGPMGMMGGFGMGMNNKQMREFMIARRTHGVSPFLKKKICHMAKVAPPVNGQMPSPPQLYAQGFKIRRIGKWFSQDLDWSEGVAMCHNKEMEHRGCEKTPSSKWGRMFPGMGGMGGMGGMGGMMMGNRPMASCDVTKPNSCGNPALMKCSKYHKDRFGMPVCCATSEMTANQLENMGF.

An N-terminal signal peptide occupies residues 1-22; it reads MSIMRRILCLAVVIFIINDVSS. Low complexity predominate over residues 26–35; it reads GNNKNWKKNG. The interval 26-84 is disordered; the sequence is GNNKNWKKNGMSLSSPGNKKPTGNNAVPQKSKMNNMNQNSLSQPKRSSPPGNSMYNMAN. A compositionally biased stretch (polar residues) spans 36-84; sequence MSLSSPGNKKPTGNNAVPQKSKMNNMNQNSLSQPKRSSPPGNSMYNMAN.

Expressed in mantle and, after secretion, incorporated into acid-insoluble nacre matrix of the shell (at protein level). Expressed primarily in the mantle with highest level in the mantle pallium and lower level in the mantle edge.

The protein localises to the secreted. The protein is Methionine-rich nacre protein of Pinctada maxima (Silver-lipped pearl oyster).